The sequence spans 709 residues: MAREFSLANTRNIGIMAHVDAGKTTTTERVLYYTGKIHKIGETHEGASQMDWMEQEQERGITITSAATTAEWKGNRVNIIDTPGHVDFTIEVQRSLRVLDGAVTVLDAQSGVEPQTETVWRQATEYGVPRIVFANKMDKIGADFYYSLSTLGDRLGANAHPIQIPIGAEDDFIGIIDLVTMKSEIYTNDLGTDIKETVVGSDEFNAELASLDFNAEEYTELANEWREKLIEAIADFDEDIMEKYFAGEEIPEAELKAAIRKATINVDFYPMLAGSAFKNKGVQMMLDAVIDYLPSPLDIPAIQGVNPDTDEEDERPASDEEPFAALAFKIMTDPFVGRLSFFRVYSGTLDAGSYVLNTSKGKRERIGRILQMHANTRKEIQTVYAGDIAAAVGLKNTTTGDSLTDEKAKIILESIEVPEPVIQLMVEPKTKADQDKMGVALQKLAEEDPTFRVETNPETGETVISGMGELHLDVLVDRMKREFKVEANVGAPQVAYRETFRAGTSARGFFKRQSGGKGQYGDVWIEFTPNEEGAGFEFENAIVGGVVPREFVPAVEKGLVETMANGVLAGYPMVDIKAKLYDGSYHDVDSSETAFKVAASLAMKEAAKTAKPAILEPMMKVTITVPEENLGDIMGHVTARRGQVNSMEAHGKSQIVNAFVPLAEMFGYATTLRSSTQGRGTFMMVFDHYSDVPKSVQEEIIAKNGRNAD.

One can recognise a tr-type G domain in the interval 8–297 (ANTRNIGIMA…AVIDYLPSPL (290 aa)). GTP-binding positions include 17-24 (AHVDAGKT), 81-85 (DTPGH), and 135-138 (NKMD).

It belongs to the TRAFAC class translation factor GTPase superfamily. Classic translation factor GTPase family. EF-G/EF-2 subfamily.

The protein localises to the cytoplasm. In terms of biological role, catalyzes the GTP-dependent ribosomal translocation step during translation elongation. During this step, the ribosome changes from the pre-translocational (PRE) to the post-translocational (POST) state as the newly formed A-site-bound peptidyl-tRNA and P-site-bound deacylated tRNA move to the P and E sites, respectively. Catalyzes the coordinated movement of the two tRNA molecules, the mRNA and conformational changes in the ribosome. This chain is Elongation factor G, found in Lactococcus lactis subsp. cremoris (strain MG1363).